The primary structure comprises 306 residues: Tyrosine recombinase EUBREC_2677 (306 aa).

Residues 2-84 (NNLQTHISSY…SIKAFFHYLE (83 aa)) form the Core-binding (CB) domain. Positions 106-296 (ILPKTIPLYI…AVSKQKDILI (191 aa)) constitute a Tyr recombinase domain. Active-site residues include Arg155, Lys179, His248, Arg251, and His274. Tyr283 acts as the O-(3'-phospho-DNA)-tyrosine intermediate in catalysis.

It belongs to the 'phage' integrase family.

The protein resides in the cytoplasm. Functionally, site-specific tyrosine recombinase, which acts by catalyzing the cutting and rejoining of the recombining DNA molecules. This is Tyrosine recombinase EUBREC_2677 from Agathobacter rectalis (strain ATCC 33656 / DSM 3377 / JCM 17463 / KCTC 5835 / VPI 0990) (Eubacterium rectale).